We begin with the raw amino-acid sequence, 154 residues long: Histidine-containing phosphotransfer protein 1 (154 aa).

Residue Met-1 is modified to N-acetylmethionine. The region spanning 38–143 (NPDFVSQVVT…FKLEQQIVAS (106 aa)) is the HPt domain. His-79 bears the Phosphohistidine mark.

Interacts with the B-type response regulators ARR1, ARR2, ARR4 and ARR9. Binds to ETR1, AHK2, AHK3, AHK4, AHK5 and FBR12. Post-translationally, two-component system major event consists of a His-to-Asp phosphorelay between a sensor histidine kinase (HK) and a response regulator (RR). In plants, the His-to-Asp phosphorelay involves an additional intermediate named Histidine-containing phosphotransfer protein (HPt). This multistep phosphorelay consists of a His-Asp-His-Asp sequential transfer of a phosphate group between first a His and an Asp of the HK protein, followed by the transfer to a conserved His of the HPt protein and finally the transfer to an Asp in the receiver domain of the RR protein. Strongly expressed in roots.

The protein resides in the cytoplasm. Its subcellular location is the cytosol. It is found in the nucleus. In terms of biological role, functions as a two-component phosphorelay mediators between cytokinin sensor histidine kinases and response regulator (B-type ARRs). Plays an important role in propagating cytokinin signal transduction through the multistep His-to-Asp phosphorelay. The chain is Histidine-containing phosphotransfer protein 1 (AHP1) from Arabidopsis thaliana (Mouse-ear cress).